Reading from the N-terminus, the 378-residue chain is Actin-related protein 2/3 complex subunit 1A (378 aa).

WD repeat units follow at residues 8 to 47, 53 to 92, 97 to 138, 143 to 182, 203 to 242, 257 to 295, and 331 to 375; these read RFAE…HWER, KHDQ…WVPT, RLNR…WVSK, RHES…VDTK, LSYS…PLAQ, ISEK…KAAS, and VHDN…QELG.

The protein belongs to the WD repeat ARPC1 family. In terms of assembly, component of the Arp2/3 complex composed of ARP2, ARP3, ARPC1/p41-ARC, ARPC2/p34-ARC, ARPC3/p21-ARC, ARPC4/p20-ARC and ARPC5/p16-ARC. In terms of tissue distribution, expressed at low levels in all tissues with a relatively highest expression in inflorescences.

It localises to the cytoplasm. The protein resides in the cytoskeleton. Its function is as follows. Functions as a component of the Arp2/3 complex which is involved in regulation of actin polymerization and together with an activating nucleation-promoting factor (NPF) mediates the formation of branched actin networks. Arp2/3 complex plays a critical role in the control of cell morphogenesis via the modulation of cell polarity development. This chain is Actin-related protein 2/3 complex subunit 1A (ARPC1A), found in Arabidopsis thaliana (Mouse-ear cress).